A 224-amino-acid polypeptide reads, in one-letter code: Putative cobalt transport protein CbiM (224 aa).

6 helical membrane passes run L8–I28, A41–P61, F75–F95, L108–L128, E138–I158, and F169–I189.

This sequence belongs to the CbiM family. As to quaternary structure, forms an energy-coupling factor (ECF) transporter complex composed of an ATP-binding protein (A component, CbiO), a transmembrane protein (T component, CbiQ) and 2 possible substrate-capture proteins (S components, CbiM and CbiN) of unknown stoichimetry.

It is found in the cell membrane. Its pathway is cofactor biosynthesis; adenosylcobalamin biosynthesis. In terms of biological role, part of the energy-coupling factor (ECF) transporter complex CbiMNOQ involved in cobalt import. This is Putative cobalt transport protein CbiM from Methanosphaera stadtmanae (strain ATCC 43021 / DSM 3091 / JCM 11832 / MCB-3).